The primary structure comprises 130 residues: Small ribosomal subunit protein uS9 (130 aa).

This sequence belongs to the universal ribosomal protein uS9 family.

The polypeptide is Small ribosomal subunit protein uS9 (Bacillus licheniformis (strain ATCC 14580 / DSM 13 / JCM 2505 / CCUG 7422 / NBRC 12200 / NCIMB 9375 / NCTC 10341 / NRRL NRS-1264 / Gibson 46)).